The chain runs to 236 residues: tRNA (guanine-N(1)-)-methyltransferase (236 aa).

S-adenosyl-L-methionine contacts are provided by residues G110 and 129 to 134 (LGDFVL).

This sequence belongs to the RNA methyltransferase TrmD family. Homodimer.

The protein resides in the cytoplasm. It carries out the reaction guanosine(37) in tRNA + S-adenosyl-L-methionine = N(1)-methylguanosine(37) in tRNA + S-adenosyl-L-homocysteine + H(+). Functionally, specifically methylates guanosine-37 in various tRNAs. The chain is tRNA (guanine-N(1)-)-methyltransferase from Clostridium perfringens (strain SM101 / Type A).